We begin with the raw amino-acid sequence, 467 residues long: Transcription factor TGAL7 (467 aa).

The span at methionine 1–glutamine 10 shows a compositional bias: basic and acidic residues. Disordered stretches follow at residues methionine 1 to serine 42 and glutamine 105 to arginine 184. The segment covering serine 25–serine 41 has biased composition (low complexity). The segment covering glutamine 120–valine 129 has biased composition (polar residues). Positions lysine 145–glycine 157 are enriched in basic and acidic residues. A compositionally biased stretch (polar residues) spans serine 158–asparagine 168. The segment covering aspartate 169 to threonine 182 has biased composition (basic and acidic residues). One can recognise a bZIP domain in the interval aspartate 179 to valine 223. Positions lysine 181 to lysine 201 are basic motif. Positions leucine 207 to valine 221 are leucine-zipper. The DOG1 domain maps to alanine 247–arginine 458.

This sequence belongs to the bZIP family. In terms of assembly, interacts with NPR5/NH4, NH5.1 and NH5.2.

It is found in the nucleus. Functionally, transcriptional regulator involved in defense response. In Oryza sativa subsp. japonica (Rice), this protein is Transcription factor TGAL7.